The sequence spans 858 residues: Bifunctional uridylyltransferase/uridylyl-removing enzyme (858 aa).

A uridylyltransferase region spans residues 1 to 324 (MSASVAEPPP…PATSGVTRVL (324 aa)). The interval 325-681 (SPGRFVEKQG…ARPSPVGDAL (357 aa)) is uridylyl-removing. The HD domain occupies 443 to 565 (VDQHILMVLR…VGSERRLTAL (123 aa)). ACT domains follow at residues 682–761 (QVLV…PEPS) and 790–858 (ILSV…AIAV).

The protein belongs to the GlnD family. It depends on Mg(2+) as a cofactor.

The enzyme catalyses [protein-PII]-L-tyrosine + UTP = [protein-PII]-uridylyl-L-tyrosine + diphosphate. It catalyses the reaction [protein-PII]-uridylyl-L-tyrosine + H2O = [protein-PII]-L-tyrosine + UMP + H(+). With respect to regulation, uridylyltransferase (UTase) activity is inhibited by glutamine, while glutamine activates uridylyl-removing (UR) activity. In terms of biological role, modifies, by uridylylation and deuridylylation, the PII regulatory proteins (GlnB and homologs), in response to the nitrogen status of the cell that GlnD senses through the glutamine level. Under low glutamine levels, catalyzes the conversion of the PII proteins and UTP to PII-UMP and PPi, while under higher glutamine levels, GlnD hydrolyzes PII-UMP to PII and UMP (deuridylylation). Thus, controls uridylylation state and activity of the PII proteins, and plays an important role in the regulation of nitrogen assimilation and metabolism. This Burkholderia pseudomallei (strain K96243) protein is Bifunctional uridylyltransferase/uridylyl-removing enzyme.